Reading from the N-terminus, the 509-residue chain is Cardiolipin synthase 1 (509 aa).

3 helical membrane passes run proline 4 to threonine 24, tyrosine 30 to isoleucine 50, and leucine 59 to phenylalanine 79. PLD phosphodiesterase domains lie at valine 238–tyrosine 265 and lysine 422–serine 449. Catalysis depends on residues histidine 243, lysine 245, aspartate 250, histidine 427, lysine 429, and aspartate 434.

This sequence belongs to the phospholipase D family. Cardiolipin synthase subfamily.

The protein localises to the cell membrane. It carries out the reaction 2 a 1,2-diacyl-sn-glycero-3-phospho-(1'-sn-glycerol) = a cardiolipin + glycerol. Functionally, catalyzes the reversible phosphatidyl group transfer from one phosphatidylglycerol molecule to another to form cardiolipin (CL) (diphosphatidylglycerol) and glycerol. This is Cardiolipin synthase 1 (cls1) from Bacillus cereus (strain ATCC 14579 / DSM 31 / CCUG 7414 / JCM 2152 / NBRC 15305 / NCIMB 9373 / NCTC 2599 / NRRL B-3711).